A 355-amino-acid chain; its full sequence is Tetraspanin-10 (355 aa).

Residues methionine 1–proline 33 form a disordered region. The Cytoplasmic portion of the chain corresponds to methionine 1–tyrosine 78. Residues leucine 79–leucine 99 traverse the membrane as a helical segment. The Extracellular segment spans residues tryptophan 100–proline 120. The helical transmembrane segment at methionine 121–glycine 141 threads the bilayer. Topologically, residues alanine 142–serine 154 are cytoplasmic. Residues glycine 155 to tryptophan 175 form a helical membrane-spanning segment. The Extracellular portion of the chain corresponds to glycine 176–glycine 355. Disulfide bonds link cysteine 212-cysteine 279, cysteine 213-cysteine 243, cysteine 229-cysteine 237, and cysteine 244-cysteine 258. The N-linked (GlcNAc...) asparagine glycan is linked to asparagine 228. A disordered region spans residues tyrosine 327–glycine 355. A compositionally biased stretch (pro residues) spans serine 341–glycine 355.

The protein belongs to the tetraspanin (TM4SF) family. Interacts with ADAM10. In terms of tissue distribution, expressed in the eye, including iris, ciliary body, retinal pigment epithelium, but not lens (protein level).

The protein localises to the cell membrane. Part of TspanC8 subgroup, composed of 6 members that interact with the transmembrane metalloprotease ADAM10. This interaction is required for ADAM10 exit from the endoplasmic reticulum and for enzymatic maturation and trafficking to the cell surface as well as substrate specificity. Different TspanC8/ADAM10 complexes have distinct substrates. The polypeptide is Tetraspanin-10 (Homo sapiens (Human)).